The chain runs to 207 residues: Probable GTP-binding protein EngB (207 aa).

The region spanning 24–199 (GGYEVAFAGR…RGIVGGWLGL (176 aa)) is the EngB-type G domain. GTP is bound by residues 32 to 39 (GRSNAGKS), 59 to 63 (GRTQQ), 77 to 80 (DLPG), 144 to 147 (TKAD), and 178 to 180 (YSG). Positions 39 and 61 each coordinate Mg(2+).

The protein belongs to the TRAFAC class TrmE-Era-EngA-EngB-Septin-like GTPase superfamily. EngB GTPase family. It depends on Mg(2+) as a cofactor.

In terms of biological role, necessary for normal cell division and for the maintenance of normal septation. The sequence is that of Probable GTP-binding protein EngB from Xanthomonas campestris pv. campestris (strain 8004).